Reading from the N-terminus, the 82-residue chain is Large ribosomal subunit protein bL27 (82 aa).

The interval 1 to 21 is disordered; sequence MAHKKGASSSRNGRDSNAKRL.

It belongs to the bacterial ribosomal protein bL27 family.

This Tropheryma whipplei (strain Twist) (Whipple's bacillus) protein is Large ribosomal subunit protein bL27.